The following is a 954-amino-acid chain: Valine--tRNA ligase (954 aa).

The short motif at 48–58 is the 'HIGH' region element; it reads PNVTGSLHMGH. Residues 560-564 carry the 'KMSKS' region motif; the sequence is KMSKS. ATP is bound at residue Lys-563. The stretch at 883 to 953 forms a coiled coil; sequence AGFINKEAEL…LKQQYLAIEA (71 aa).

This sequence belongs to the class-I aminoacyl-tRNA synthetase family. ValS type 1 subfamily. In terms of assembly, monomer.

Its subcellular location is the cytoplasm. It carries out the reaction tRNA(Val) + L-valine + ATP = L-valyl-tRNA(Val) + AMP + diphosphate. In terms of biological role, catalyzes the attachment of valine to tRNA(Val). As ValRS can inadvertently accommodate and process structurally similar amino acids such as threonine, to avoid such errors, it has a 'posttransfer' editing activity that hydrolyzes mischarged Thr-tRNA(Val) in a tRNA-dependent manner. The protein is Valine--tRNA ligase of Pasteurella multocida (strain Pm70).